We begin with the raw amino-acid sequence, 276 residues long: RNA-binding protein pno-1 (276 aa).

2 disordered regions span residues 1-30 (MATSSSAFDDEFPMEEGMPELLDDEDVPST) and 62-101 (DVVMEDISQPDDSTTDSPDADAEQKPTKRSKGSKGESRVV). Residues 8-27 (FDDEFPMEEGMPELLDDEDV) are compositionally biased toward acidic residues. The 53-residue stretch at 197-249 (GDHVSRAIGRIAGKDGRTKLVIENTTKTRIVVANTKIHILGAYQNLKLARNAV) folds into the KH domain.

Belongs to the PNO1 family. Part of the small subunit (SSU) processome, composed of more than 70 proteins and the RNA chaperone small nucleolar RNA (snoRNA) U3.

The protein localises to the nucleus. It is found in the nucleolus. Functionally, part of the small subunit (SSU) processome, first precursor of the small eukaryotic ribosomal subunit. During the assembly of the SSU processome in the nucleolus, many ribosome biogenesis factors, an RNA chaperone and ribosomal proteins associate with the nascent pre-rRNA and work in concert to generate RNA folding, modifications, rearrangements and cleavage as well as targeted degradation of pre-ribosomal RNA by the RNA exosome. Positively regulates dimethylation of two adjacent adenosines in the loop of a conserved hairpin near the 3'-end of 18S rRNA. In Caenorhabditis briggsae, this protein is RNA-binding protein pno-1.